The following is a 206-amino-acid chain: FMN-dependent NADH:quinone oxidoreductase 2 (206 aa).

Ser-10 serves as a coordination point for FMN.

The protein belongs to the azoreductase type 1 family. As to quaternary structure, homodimer. It depends on FMN as a cofactor.

It catalyses the reaction 2 a quinone + NADH + H(+) = 2 a 1,4-benzosemiquinone + NAD(+). The enzyme catalyses N,N-dimethyl-1,4-phenylenediamine + anthranilate + 2 NAD(+) = 2-(4-dimethylaminophenyl)diazenylbenzoate + 2 NADH + 2 H(+). Functionally, quinone reductase that provides resistance to thiol-specific stress caused by electrophilic quinones. Its function is as follows. Also exhibits azoreductase activity. Catalyzes the reductive cleavage of the azo bond in aromatic azo compounds to the corresponding amines. This is FMN-dependent NADH:quinone oxidoreductase 2 from Rhizobium etli (strain ATCC 51251 / DSM 11541 / JCM 21823 / NBRC 15573 / CFN 42).